The following is a 403-amino-acid chain: Phosphopentomutase (403 aa).

Mn(2+) contacts are provided by aspartate 13, aspartate 298, histidine 303, aspartate 339, histidine 340, and histidine 351.

Belongs to the phosphopentomutase family. Mn(2+) is required as a cofactor.

Its subcellular location is the cytoplasm. It catalyses the reaction 2-deoxy-alpha-D-ribose 1-phosphate = 2-deoxy-D-ribose 5-phosphate. It carries out the reaction alpha-D-ribose 1-phosphate = D-ribose 5-phosphate. The protein operates within carbohydrate degradation; 2-deoxy-D-ribose 1-phosphate degradation; D-glyceraldehyde 3-phosphate and acetaldehyde from 2-deoxy-alpha-D-ribose 1-phosphate: step 1/2. In terms of biological role, isomerase that catalyzes the conversion of deoxy-ribose 1-phosphate (dRib-1-P) and ribose 1-phosphate (Rib-1-P) to deoxy-ribose 5-phosphate (dRib-5-P) and ribose 5-phosphate (Rib-5-P), respectively. The protein is Phosphopentomutase of Streptococcus thermophilus (strain CNRZ 1066).